We begin with the raw amino-acid sequence, 71 residues long: Large ribosomal subunit protein uL29 (71 aa).

This sequence belongs to the universal ribosomal protein uL29 family.

This Rickettsia massiliae (strain Mtu5) protein is Large ribosomal subunit protein uL29.